Reading from the N-terminus, the 190-residue chain is RNA pyrophosphohydrolase (190 aa).

In terms of domain architecture, Nudix hydrolase spans 6–149 (GYRPNVGIIL…KRDVYTQALN (144 aa)). The short motif at 38 to 59 (GGIKYGESPVQAMYRELHEEVG) is the Nudix box element. Positions 167-190 (QRVHGPRSTDSPSSETDGHAHIAG) are disordered.

It belongs to the Nudix hydrolase family. RppH subfamily. A divalent metal cation is required as a cofactor.

In terms of biological role, accelerates the degradation of transcripts by removing pyrophosphate from the 5'-end of triphosphorylated RNA, leading to a more labile monophosphorylated state that can stimulate subsequent ribonuclease cleavage. The sequence is that of RNA pyrophosphohydrolase from Bordetella pertussis (strain Tohama I / ATCC BAA-589 / NCTC 13251).